The primary structure comprises 633 residues: Phosphomethylpyrimidine synthase (633 aa).

Substrate-binding positions include Asn245, Met274, Tyr303, His339, 359–361, 400–403, and Glu439; these read SRG and DGLR. His443 provides a ligand contact to Zn(2+). Tyr466 is a binding site for substrate. His507 is a binding site for Zn(2+). 3 residues coordinate [4Fe-4S] cluster: Cys587, Cys590, and Cys595.

It belongs to the ThiC family. As to quaternary structure, homodimer. It depends on [4Fe-4S] cluster as a cofactor.

The catalysed reaction is 5-amino-1-(5-phospho-beta-D-ribosyl)imidazole + S-adenosyl-L-methionine = 4-amino-2-methyl-5-(phosphooxymethyl)pyrimidine + CO + 5'-deoxyadenosine + formate + L-methionine + 3 H(+). The protein operates within cofactor biosynthesis; thiamine diphosphate biosynthesis. Its function is as follows. Catalyzes the synthesis of the hydroxymethylpyrimidine phosphate (HMP-P) moiety of thiamine from aminoimidazole ribotide (AIR) in a radical S-adenosyl-L-methionine (SAM)-dependent reaction. The chain is Phosphomethylpyrimidine synthase from Neisseria meningitidis serogroup C (strain 053442).